The sequence spans 198 residues: Holliday junction branch migration complex subunit RuvA (198 aa).

The segment at methionine 1–histidine 63 is domain I. The tract at residues threonine 64–lysine 142 is domain II. Positions alanine 143–lysine 147 are flexible linker. The segment at alanine 148–glycine 198 is domain III.

Belongs to the RuvA family. In terms of assembly, homotetramer. Forms an RuvA(8)-RuvB(12)-Holliday junction (HJ) complex. HJ DNA is sandwiched between 2 RuvA tetramers; dsDNA enters through RuvA and exits via RuvB. An RuvB hexamer assembles on each DNA strand where it exits the tetramer. Each RuvB hexamer is contacted by two RuvA subunits (via domain III) on 2 adjacent RuvB subunits; this complex drives branch migration. In the full resolvosome a probable DNA-RuvA(4)-RuvB(12)-RuvC(2) complex forms which resolves the HJ.

The protein resides in the cytoplasm. The RuvA-RuvB-RuvC complex processes Holliday junction (HJ) DNA during genetic recombination and DNA repair, while the RuvA-RuvB complex plays an important role in the rescue of blocked DNA replication forks via replication fork reversal (RFR). RuvA specifically binds to HJ cruciform DNA, conferring on it an open structure. The RuvB hexamer acts as an ATP-dependent pump, pulling dsDNA into and through the RuvAB complex. HJ branch migration allows RuvC to scan DNA until it finds its consensus sequence, where it cleaves and resolves the cruciform DNA. This chain is Holliday junction branch migration complex subunit RuvA, found in Streptococcus pyogenes serotype M12 (strain MGAS2096).